Here is a 313-residue protein sequence, read N- to C-terminus: uncharacterized protein (313 aa).

The segment at 1–313 (MSRNGRNDYD…SSSRSGSSRR (313 aa)) is disordered. Basic and acidic residues-rich tracts occupy residues 24 to 33 (LARDRERDSE), 40 to 85 (TGER…DVKY), 95 to 116 (TTRE…DELG), and 156 to 181 (TDER…DEFG). Basic residues predominate over residues 194–205 (RGRRSNSRRRSS). Composition is skewed to low complexity over residues 206-266 (NARS…GSKS) and 272-313 (SRSG…SSRR).

Its subcellular location is the virion. This is an uncharacterized protein from Acanthamoeba polyphaga mimivirus (APMV).